Consider the following 326-residue polypeptide: Phosphate acyltransferase (326 aa).

The protein belongs to the PlsX family. Homodimer. Probably interacts with PlsY.

The protein localises to the cytoplasm. The catalysed reaction is a fatty acyl-[ACP] + phosphate = an acyl phosphate + holo-[ACP]. The protein operates within lipid metabolism; phospholipid metabolism. Catalyzes the reversible formation of acyl-phosphate (acyl-PO(4)) from acyl-[acyl-carrier-protein] (acyl-ACP). This enzyme utilizes acyl-ACP as fatty acyl donor, but not acyl-CoA. The sequence is that of Phosphate acyltransferase from Petrotoga mobilis (strain DSM 10674 / SJ95).